We begin with the raw amino-acid sequence, 644 residues long: Tubulin--tyrosine ligase-like protein 12 (644 aa).

Over residues 1–13 (MEAERGPERRPAE) the composition is skewed to basic and acidic residues. The segment at 1-25 (MEAERGPERRPAERSSPGQTPEEGA) is disordered. The TTL domain occupies 300 to 644 (PHGHIFKVYT…PGGCHVTCLV (345 aa)). Residues 450-453 (SKYI), lysine 468, and aspartate 470 contribute to the ATP site.

The protein belongs to the tubulin--tyrosine ligase family. As to quaternary structure, interacts with MAVS; the interaction prevents MAVS binding to TBK1 and IKBKE. Interacts (via N-terminus) with TBK1 (via protein kinase domain). Interacts (via TTL domain) with IKBKE (via protein kinase domain). Interacts with tubulin alpha. Interacts with histone H3 and histone H4 (when trimethylated at 'Lys-20' (H4K20me3)). Interacts with CBX3. As to expression, expressed in the basal layer of prostate and endothelial cells. Increased expression in prostatic intraepithelial neoplasia and metastatic lesions.

The protein localises to the cytoplasm. It is found in the midbody. It localises to the cytoskeleton. The protein resides in the microtubule organizing center. Its subcellular location is the centrosome. The protein localises to the spindle. It is found in the nucleus. Functionally, negatively regulates post-translational modifications of tubulin, including detyrosination of the C-terminus and polyglutamylation of glutamate residues. Also, indirectly promotes histone H4 trimethylation at 'Lys-20' (H4K20me3). Probably by controlling tubulin and/or histone H4 post-translational modifications, plays a role in mitosis and in maintaining chromosome number stability. During RNA virus-mediated infection, acts as a negative regulator of the RIG-I pathway by preventing MAVS binding to TBK1 and IKBKE. This Homo sapiens (Human) protein is Tubulin--tyrosine ligase-like protein 12 (TTLL12).